We begin with the raw amino-acid sequence, 579 residues long: Polyadenylate-binding protein, cytoplasmic and nuclear (579 aa).

The span at 1–10 (MADITEKTAE) shows a compositional bias: basic and acidic residues. The disordered stretch occupies residues 1–32 (MADITEKTAEQLENLSLQDKQEGTNEENQSET). RRM domains lie at 35–113 (ASLY…WSQR), 123–200 (GNIF…PHLS), 216–293 (TNVY…RAQK), and 319–396 (INLF…IAQR). The region spanning 487-566 (GFARNGPAAN…ASAAYESFKQ (80 aa)) is the PABC domain. A disordered region spans residues 560–579 (AYESFKQEQQQPQGEEAQQA). A compositionally biased stretch (low complexity) spans 566–579 (QEQQQPQGEEAQQA).

Belongs to the polyadenylate-binding protein type-1 family.

The protein resides in the cytoplasm. Its subcellular location is the nucleus. Its function is as follows. Binds the poly(A) tail of mRNA. Appears to be an important mediator of the multiple roles of the poly(A) tail in mRNA biogenesis, stability and translation. In the nucleus, involved in both mRNA cleavage and polyadenylation. Is also required for efficient mRNA export to the cytoplasm. Acts in concert with a poly(A)-specific nuclease (PAN) to affect poly(A) tail shortening, which may occur concomitantly with either nucleocytoplasmic mRNA transport or translational initiation. In the cytoplasm, stimulates translation initiation and regulates mRNA decay through translation termination-coupled poly(A) shortening, probably mediated by PAN. The chain is Polyadenylate-binding protein, cytoplasmic and nuclear (PAB1) from Candida glabrata (strain ATCC 2001 / BCRC 20586 / JCM 3761 / NBRC 0622 / NRRL Y-65 / CBS 138) (Yeast).